Consider the following 115-residue polypeptide: Large ribosomal subunit protein uL22 (115 aa).

This sequence belongs to the universal ribosomal protein uL22 family. As to quaternary structure, part of the 50S ribosomal subunit.

In terms of biological role, this protein binds specifically to 23S rRNA; its binding is stimulated by other ribosomal proteins, e.g. L4, L17, and L20. It is important during the early stages of 50S assembly. It makes multiple contacts with different domains of the 23S rRNA in the assembled 50S subunit and ribosome. Its function is as follows. The globular domain of the protein is located near the polypeptide exit tunnel on the outside of the subunit, while an extended beta-hairpin is found that lines the wall of the exit tunnel in the center of the 70S ribosome. This is Large ribosomal subunit protein uL22 from Ligilactobacillus salivarius (strain UCC118) (Lactobacillus salivarius).